A 615-amino-acid polypeptide reads, in one-letter code: DNA mismatch repair protein MutL (615 aa).

The interval 362 to 397 is disordered; that stretch reads HFAEPAVREPVAPRYTPAPASGSRPAAPWPNAQPGY. The segment covering 378-391 has biased composition (low complexity); sequence PAPASGSRPAAPWP.

This sequence belongs to the DNA mismatch repair MutL/HexB family.

Its function is as follows. This protein is involved in the repair of mismatches in DNA. It is required for dam-dependent methyl-directed DNA mismatch repair. May act as a 'molecular matchmaker', a protein that promotes the formation of a stable complex between two or more DNA-binding proteins in an ATP-dependent manner without itself being part of a final effector complex. The sequence is that of DNA mismatch repair protein MutL from Escherichia coli O17:K52:H18 (strain UMN026 / ExPEC).